The following is a 199-amino-acid chain: Superoxide dismutase [Mn/Fe] 2 (199 aa).

Fe(3+) contacts are provided by His-27, His-81, Asp-161, and His-165. Positions 27, 81, 161, and 165 each coordinate Mn(2+).

It belongs to the iron/manganese superoxide dismutase family. Homodimer. Can also form a heterodimer with SodA. Mn(2+) serves as cofactor. The cofactor is Fe(3+).

The catalysed reaction is 2 superoxide + 2 H(+) = H2O2 + O2. Destroys superoxide anion radicals which are normally produced within the cells and which are toxic to biological systems. Catalyzes the dismutation of superoxide anion radicals into O2 and H2O2 by successive reduction and oxidation of the transition metal ion at the active site. The protein is Superoxide dismutase [Mn/Fe] 2 (sodM) of Staphylococcus aureus (strain USA300).